Here is a 207-residue protein sequence, read N- to C-terminus: Probable RNA 2'-phosphotransferase (207 aa).

It belongs to the KptA/TPT1 family.

In terms of biological role, removes the 2'-phosphate from RNA via an intermediate in which the phosphate is ADP-ribosylated by NAD followed by a presumed transesterification to release the RNA and generate ADP-ribose 1''-2''-cyclic phosphate (APPR&gt;P). May function as an ADP-ribosylase. This chain is Probable RNA 2'-phosphotransferase, found in Methanosarcina mazei (strain ATCC BAA-159 / DSM 3647 / Goe1 / Go1 / JCM 11833 / OCM 88) (Methanosarcina frisia).